Here is a 286-residue protein sequence, read N- to C-terminus: Bifunctional protein FolD (286 aa).

NADP(+) is bound by residues 164–166 (GRS), Ser-193, and Ile-234.

It belongs to the tetrahydrofolate dehydrogenase/cyclohydrolase family. In terms of assembly, homodimer.

It carries out the reaction (6R)-5,10-methylene-5,6,7,8-tetrahydrofolate + NADP(+) = (6R)-5,10-methenyltetrahydrofolate + NADPH. The enzyme catalyses (6R)-5,10-methenyltetrahydrofolate + H2O = (6R)-10-formyltetrahydrofolate + H(+). Its pathway is one-carbon metabolism; tetrahydrofolate interconversion. Catalyzes the oxidation of 5,10-methylenetetrahydrofolate to 5,10-methenyltetrahydrofolate and then the hydrolysis of 5,10-methenyltetrahydrofolate to 10-formyltetrahydrofolate. In Maridesulfovibrio salexigens (strain ATCC 14822 / DSM 2638 / NCIMB 8403 / VKM B-1763) (Desulfovibrio salexigens), this protein is Bifunctional protein FolD.